The chain runs to 481 residues: Aspartyl/glutamyl-tRNA(Asn/Gln) amidotransferase subunit B (481 aa).

Belongs to the GatB/GatE family. GatB subfamily. Heterotrimer of A, B and C subunits.

The enzyme catalyses L-glutamyl-tRNA(Gln) + L-glutamine + ATP + H2O = L-glutaminyl-tRNA(Gln) + L-glutamate + ADP + phosphate + H(+). It carries out the reaction L-aspartyl-tRNA(Asn) + L-glutamine + ATP + H2O = L-asparaginyl-tRNA(Asn) + L-glutamate + ADP + phosphate + 2 H(+). Allows the formation of correctly charged Asn-tRNA(Asn) or Gln-tRNA(Gln) through the transamidation of misacylated Asp-tRNA(Asn) or Glu-tRNA(Gln) in organisms which lack either or both of asparaginyl-tRNA or glutaminyl-tRNA synthetases. The reaction takes place in the presence of glutamine and ATP through an activated phospho-Asp-tRNA(Asn) or phospho-Glu-tRNA(Gln). The sequence is that of Aspartyl/glutamyl-tRNA(Asn/Gln) amidotransferase subunit B from Pseudomonas entomophila (strain L48).